Here is a 595-residue protein sequence, read N- to C-terminus: Aspartate--tRNA(Asp/Asn) ligase (595 aa).

Position 175 (E175) interacts with L-aspartate. The tract at residues 199–202 (QQYK) is aspartate. L-aspartate-binding residues include R221 and H454. An ATP-binding site is contributed by 221–223 (RDE). Position 488 (E488) interacts with ATP. R495 is a binding site for L-aspartate. An ATP-binding site is contributed by 540-543 (GIDR).

It belongs to the class-II aminoacyl-tRNA synthetase family. Type 1 subfamily. In terms of assembly, homodimer.

Its subcellular location is the cytoplasm. It catalyses the reaction tRNA(Asx) + L-aspartate + ATP = L-aspartyl-tRNA(Asx) + AMP + diphosphate. Functionally, aspartyl-tRNA synthetase with relaxed tRNA specificity since it is able to aspartylate not only its cognate tRNA(Asp) but also tRNA(Asn). Reaction proceeds in two steps: L-aspartate is first activated by ATP to form Asp-AMP and then transferred to the acceptor end of tRNA(Asp/Asn). This chain is Aspartate--tRNA(Asp/Asn) ligase, found in Sinorhizobium medicae (strain WSM419) (Ensifer medicae).